Reading from the N-terminus, the 405-residue chain is Obg-like ATPase homolog (405 aa).

An OBG-type G domain is found at 17–283 (PTSGIVGLAN…CKGIASEYFD (267 aa)). ATP-binding positions include 26–31 (NVGKST) and Val-231. One can recognise a TGS domain in the interval 312–398 (NLISFFTCGP…QDNDIALFKA (87 aa)).

The protein belongs to the TRAFAC class OBG-HflX-like GTPase superfamily. OBG GTPase family.

It localises to the mitochondrion. Functionally, hydrolyzes ATP, and can also hydrolyze GTP with lower efficiency. Has lower affinity for GTP. The polypeptide is Obg-like ATPase homolog (YLF2) (Saccharomyces cerevisiae (strain ATCC 204508 / S288c) (Baker's yeast)).